The primary structure comprises 80 residues: UPF0154 protein SaurJH1_1431 (80 aa).

A helical transmembrane segment spans residues 4 to 24 (WLAIIFIVAALILGLIGGFLL).

This sequence belongs to the UPF0154 family.

It localises to the cell membrane. The chain is UPF0154 protein SaurJH1_1431 from Staphylococcus aureus (strain JH1).